Consider the following 269-residue polypeptide: Type II iodothyronine deiodinase (269 aa).

Residues 1-9 lie on the Lumenal side of the membrane; the sequence is MGILSVDLL. A helical; Signal-anchor for type III membrane protein transmembrane segment spans residues 10–34; that stretch reads ITLQILPVFFSNCLFLALYDSVILL. The Cytoplasmic segment spans residues 35-269; it reads KHVVLLLSRS…KNFSKRUKKT (235 aa). Selenocysteine 133 is a catalytic residue. Residues selenocysteine 133 and selenocysteine 266 are each a non-standard amino acid (selenocysteine).

It belongs to the iodothyronine deiodinase family. As to quaternary structure, predominantly monomer. Can form homodimers but homodimerization is not essential for enzyme activity. Interacts with USP20 and USP33. Interacts with MARCHF6. In terms of processing, ubiquitinated by MARCHF6, leading to its degradation by the proteasome. Deubiquitinated by USP20 and USP33. More expressed in pituitary than in brain, low to undetectable levels in thyroid and skeletal muscle.

The protein localises to the endoplasmic reticulum membrane. The enzyme catalyses 3,3',5-triiodo-L-thyronine + iodide + A + H(+) = L-thyroxine + AH2. It carries out the reaction 3,3'-diiodo-L-thyronine + iodide + A + H(+) = 3,3',5'-triiodo-L-thyronine + AH2. It catalyses the reaction 3'-iodo-L-thyronine + iodide + A + H(+) = 3',5'-diiodo-L-thyronine + AH2. The catalysed reaction is 3,3'-diiodothyronamine + iodide + A + H(+) = 3,3',5'-triiodothyronamine + AH2. The enzyme catalyses 3'-iodothyronamine + iodide + A + H(+) = 3',5'-diiodothyronamine + AH2. Functionally, plays a crucial role in the metabolism of thyroid hormones (TH) and has specific roles in TH activation and inactivation by deiodination.Catalyzes the deiodination of L-thyroxine (T4) to 3,5,3'-triiodothyronine (T3) and 3,3',5'-triiodothyronine (rT3) to 3,3'-diiodothyronine (3,3'-T2) via outer-ring deiodination (ORD). Catalyzes the deiodination of 3',5'-diiodothyronine (3',5'-T2) to 3'-monoiodothyronine (3'-T1) via ORD. Catalyzes the phenolic ring deiodinations of 3,3',5'-triiodothyronamine and 3',5'- diiodothyronamine. The polypeptide is Type II iodothyronine deiodinase (DIO2) (Sus scrofa (Pig)).